Reading from the N-terminus, the 361-residue chain is Alanine racemase (361 aa).

The active-site Proton acceptor; specific for D-alanine is K34. Residue K34 is modified to N6-(pyridoxal phosphate)lysine. R129 is a binding site for substrate. The active-site Proton acceptor; specific for L-alanine is Y254. M302 is a substrate binding site.

Belongs to the alanine racemase family. Pyridoxal 5'-phosphate serves as cofactor.

It carries out the reaction L-alanine = D-alanine. It catalyses the reaction L-serine = D-serine. It participates in amino-acid biosynthesis; D-alanine biosynthesis; D-alanine from L-alanine: step 1/1. Its function is as follows. Catalyzes the interconversion of L-alanine and D-alanine. Likely plays an important role in supplying D-alanine, which is an indispensable constituent in the biosynthesis of bacterial cell-wall peptidoglycan. To a lesser extent, is also able to racemize L-serine and D-serine. Does not act on other proteinogenic amino-acids. This Vibrio cholerae serotype O1 (strain ATCC 39315 / El Tor Inaba N16961) protein is Alanine racemase (alr1).